The following is a 251-amino-acid chain: Aspartate/glutamate leucyltransferase (251 aa).

Belongs to the R-transferase family. Bpt subfamily.

Its subcellular location is the cytoplasm. The catalysed reaction is N-terminal L-glutamyl-[protein] + L-leucyl-tRNA(Leu) = N-terminal L-leucyl-L-glutamyl-[protein] + tRNA(Leu) + H(+). It carries out the reaction N-terminal L-aspartyl-[protein] + L-leucyl-tRNA(Leu) = N-terminal L-leucyl-L-aspartyl-[protein] + tRNA(Leu) + H(+). Functions in the N-end rule pathway of protein degradation where it conjugates Leu from its aminoacyl-tRNA to the N-termini of proteins containing an N-terminal aspartate or glutamate. The polypeptide is Aspartate/glutamate leucyltransferase (Xanthomonas oryzae pv. oryzae (strain KACC10331 / KXO85)).